The chain runs to 610 residues: Dihydroxy-acid dehydratase (610 aa).

D81 serves as a coordination point for Mg(2+). Position 122 (C122) interacts with [2Fe-2S] cluster. Residues D123 and K124 each coordinate Mg(2+). K124 carries the post-translational modification N6-carboxylysine. C196 lines the [2Fe-2S] cluster pocket. Residue E492 participates in Mg(2+) binding. Residue S518 is the Proton acceptor of the active site.

It belongs to the IlvD/Edd family. As to quaternary structure, homodimer. It depends on [2Fe-2S] cluster as a cofactor. The cofactor is Mg(2+).

It catalyses the reaction (2R)-2,3-dihydroxy-3-methylbutanoate = 3-methyl-2-oxobutanoate + H2O. The catalysed reaction is (2R,3R)-2,3-dihydroxy-3-methylpentanoate = (S)-3-methyl-2-oxopentanoate + H2O. Its pathway is amino-acid biosynthesis; L-isoleucine biosynthesis; L-isoleucine from 2-oxobutanoate: step 3/4. It functions in the pathway amino-acid biosynthesis; L-valine biosynthesis; L-valine from pyruvate: step 3/4. Functionally, functions in the biosynthesis of branched-chain amino acids. Catalyzes the dehydration of (2R,3R)-2,3-dihydroxy-3-methylpentanoate (2,3-dihydroxy-3-methylvalerate) into 2-oxo-3-methylpentanoate (2-oxo-3-methylvalerate) and of (2R)-2,3-dihydroxy-3-methylbutanoate (2,3-dihydroxyisovalerate) into 2-oxo-3-methylbutanoate (2-oxoisovalerate), the penultimate precursor to L-isoleucine and L-valine, respectively. This chain is Dihydroxy-acid dehydratase, found in Ruegeria pomeroyi (strain ATCC 700808 / DSM 15171 / DSS-3) (Silicibacter pomeroyi).